The following is a 327-amino-acid chain: MQNSASEFLKPRLIDVQPVSATHARVSMEPFERGYAHTLGNSLRRILLSSMPGYAPTEVTIAGVLHEYSALDGVREDVVDILLNLKGVVLKLHGRDSVVLTLKKEGEGAVLASDIELPHDVEVINPEHVICHISSGGKIDMEVKVEKGRGYQPVSARTSHDDNRSIGTIQLDASFSPVRRVSFAVESARVEQRTDLDRLVLDIETNGVIEPEQAVRNAARILMDQLSIFADLQGTAVEEVVEKAPPIDPILLRPVDDLELTVRSANCLKAENIYYIGDLIQRTETELLKTPNLGRKSLNEIKEVLASKGLTLGMKLENWPPAGLEKP.

Positions 1-233 are alpha N-terminal domain (alpha-NTD); that stretch reads MQNSASEFLK…DQLSIFADLQ (233 aa). The segment at 247–327 is alpha C-terminal domain (alpha-CTD); the sequence is IDPILLRPVD…NWPPAGLEKP (81 aa).

This sequence belongs to the RNA polymerase alpha chain family. As to quaternary structure, homodimer. The RNAP catalytic core consists of 2 alpha, 1 beta, 1 beta' and 1 omega subunit. When a sigma factor is associated with the core the holoenzyme is formed, which can initiate transcription.

It carries out the reaction RNA(n) + a ribonucleoside 5'-triphosphate = RNA(n+1) + diphosphate. In terms of biological role, DNA-dependent RNA polymerase catalyzes the transcription of DNA into RNA using the four ribonucleoside triphosphates as substrates. The chain is DNA-directed RNA polymerase subunit alpha from Chromobacterium violaceum (strain ATCC 12472 / DSM 30191 / JCM 1249 / CCUG 213 / NBRC 12614 / NCIMB 9131 / NCTC 9757 / MK).